The following is a 370-amino-acid chain: Prolactin-releasing peptide receptor (370 aa).

The disordered stretch occupies residues 1–34 (MTSLPPGTTGDPDLFSGPSPAGSTPANQSAEASE). At 1 to 62 (MTSLPPGTTG…LQLVHQLKGL (62 aa)) the chain is on the extracellular side. The span at 21-34 (AGSTPANQSAEASE) shows a compositional bias: polar residues. Residues Asn27 and Asn36 are each glycosylated (N-linked (GlcNAc...) asparagine). The helical transmembrane segment at 63-83 (IVMLYSIVVVVGLVGNCLLVL) threads the bilayer. Residues 84–101 (VIARVRRLHNVTNFLIGN) lie on the Cytoplasmic side of the membrane. Residues 102-122 (LALSDVLMCAACVPLTLAYAF) traverse the membrane as a helical segment. The Extracellular segment spans residues 123-126 (EPRG). Residues 127-147 (WVFGGGLCHLVFFLQPVTVYV) form a helical membrane-spanning segment. A disulfide bridge connects residues Cys134 and Cys211. Residues 148 to 175 (SVFTLTTIAVDRYVVLVHPLRRRISLKL) lie on the Cytoplasmic side of the membrane. Residues 176–196 (SAYAVLGIWALSAVLALPAAV) form a helical membrane-spanning segment. Residues 197-223 (HTYHVELKPHDVRLCEEFWGSQERQRQ) are Extracellular-facing. Residues 224-244 (IYAWGLLLGTYLLPLLAILLS) traverse the membrane as a helical segment. Topologically, residues 245–276 (YVRVSVKLRNRVVPGSVTQSQADWDRARRRRT) are cytoplasmic. Residues 277 to 297 (FCLLVVVVVVFALCWLPLHIF) traverse the membrane as a helical segment. Residues 298-317 (NLLRDLDPRAIDPYAFGLVQ) are Extracellular-facing. A helical membrane pass occupies residues 318–338 (LLCHWLAMSSACYNPFIYAWL). Over 339-370 (HDSFREELRKMLLSWPRKIVPHGQNMTVSVVI) the chain is Cytoplasmic. Positions 365-370 (TVSVVI) are required for interaction with GRIP1, GRIP2 and PICK1.

It belongs to the G-protein coupled receptor 1 family. In terms of assembly, interacts through its C-terminal region with the PDZ domain-containing proteins GRIP1, GRIP2 and PICK1. Interacts with PDZ domains 4 and 5 of GRIP1 and with the PDZ domain of PICK1. Widely expressed, with highest levels in pituitary, cerebellum, and hypothalamus.

It is found in the cell membrane. In terms of biological role, receptor for prolactin-releasing peptide (PrRP). Implicated in lactation, regulation of food intake and pain-signal processing. This Rattus norvegicus (Rat) protein is Prolactin-releasing peptide receptor (Prlhr).